The sequence spans 126 residues: Small ribosomal subunit protein uS13 (126 aa).

Positions 92 to 126 (HRRGLPANGQRTHTNARTRKGPRKGMLQRRPAATK) are disordered. Residues 105–118 (TNARTRKGPRKGML) are compositionally biased toward basic residues.

It belongs to the universal ribosomal protein uS13 family. Part of the 30S ribosomal subunit. Forms a loose heterodimer with protein S19. Forms two bridges to the 50S subunit in the 70S ribosome.

Functionally, located at the top of the head of the 30S subunit, it contacts several helices of the 16S rRNA. In the 70S ribosome it contacts the 23S rRNA (bridge B1a) and protein L5 of the 50S subunit (bridge B1b), connecting the 2 subunits; these bridges are implicated in subunit movement. Contacts the tRNAs in the A and P-sites. This chain is Small ribosomal subunit protein uS13, found in Sorangium cellulosum (strain So ce56) (Polyangium cellulosum (strain So ce56)).